Reading from the N-terminus, the 526-residue chain is Tyrosine-protein kinase transforming protein Src (526 aa).

A disordered region spans residues 1–57 (MGSSKSKPKDPSQRRRSLEPPDSTHHGGFPASQTPNKTAAPDTHRTPSRSFGTVATE). Glycine 2 carries the N-myristoyl glycine; by host lipid modification. The segment covering 7-25 (KPKDPSQRRRSLEPPDSTH) has biased composition (basic and acidic residues). Residues 81–142 (GGVTTFVALY…PSNYVAPSDS (62 aa)) enclose the SH3 domain. The region spanning 148-245 (WYFGKITRRE…GLCHRLTNVC (98 aa)) is the SH2 domain. In terms of domain architecture, Protein kinase spans 267–517 (LRLEVKLGQG…TFEYLQAQLL (251 aa)). ATP is bound by residues 273-281 (LGQGCFGEV) and lysine 295. Aspartate 386 acts as the Proton acceptor in catalysis. Tyrosine 416 is modified (phosphotyrosine; by autocatalysis).

It belongs to the protein kinase superfamily. Tyr protein kinase family. SRC subfamily. Homodimer. Post-translationally, the phosphorylated form is termed pp60v-src.

The enzyme catalyses L-tyrosyl-[protein] + ATP = O-phospho-L-tyrosyl-[protein] + ADP + H(+). Functionally, this phosphoprotein, required for both the initiation and the maintenance of neoplastic transformation, is a protein kinase that catalyzes the phosphorylation of tyrosine residues in vitro. Causes mitotic slippage in addition to cytokinesis failure in the host cell. Phosphorylates and attenuates the activity of host CDK1, possibly causing the mitotic slippage. The protein is Tyrosine-protein kinase transforming protein Src (V-SRC) of Rous sarcoma virus subgroup A (strain Schmidt-Ruppin) (RSV-SR-A).